A 121-amino-acid polypeptide reads, in one-letter code: Large ribosomal subunit protein bL12 (121 aa).

The protein belongs to the bacterial ribosomal protein bL12 family. Homodimer. Part of the ribosomal stalk of the 50S ribosomal subunit. Forms a multimeric L10(L12)X complex, where L10 forms an elongated spine to which 2 to 4 L12 dimers bind in a sequential fashion. Binds GTP-bound translation factors.

Functionally, forms part of the ribosomal stalk which helps the ribosome interact with GTP-bound translation factors. Is thus essential for accurate translation. This Bacillus pumilus (strain SAFR-032) protein is Large ribosomal subunit protein bL12.